Here is a 404-residue protein sequence, read N- to C-terminus: Schlafen-like protein 1 (404 aa).

Disordered regions lie at residues 1-31 (MTPM…LPTE) and 139-170 (GPLS…AWPT). Polar residues predominate over residues 7–16 (SVQTQVSEPF). Over residues 152-165 (GLSPGPNPGSGVPL) the composition is skewed to low complexity. 258 to 265 (GVEDSGLV) provides a ligand contact to ATP. Residues 365–395 (RWLVELGKLEERVKVLTMEKEQLQQQLQQHG) are a coiled coil.

The protein belongs to the Schlafen family. Subgroup I subfamily.

The polypeptide is Schlafen-like protein 1 (SLFNL1) (Macaca fascicularis (Crab-eating macaque)).